A 584-amino-acid chain; its full sequence is UvrABC system protein C (584 aa).

Residues 12-89 enclose the GIY-YIG domain; sequence NKPGCYLFLN…IKKYRPKYNV (78 aa). One can recognise a UVR domain in the interval 194–229; sequence NQVKQTLVKQMQKASDNLQFEQAKRIKDQITSLDFI.

It belongs to the UvrC family. As to quaternary structure, interacts with UvrB in an incision complex.

Its subcellular location is the cytoplasm. Its function is as follows. The UvrABC repair system catalyzes the recognition and processing of DNA lesions. UvrC both incises the 5' and 3' sides of the lesion. The N-terminal half is responsible for the 3' incision and the C-terminal half is responsible for the 5' incision. The polypeptide is UvrABC system protein C (Mycoplasma capricolum subsp. capricolum (strain California kid / ATCC 27343 / NCTC 10154)).